A 590-amino-acid chain; its full sequence is Arginine--tRNA ligase (590 aa).

The 'HIGH' region motif lies at 138–148; sequence ANPTGPLHIGH.

This sequence belongs to the class-I aminoacyl-tRNA synthetase family. In terms of assembly, monomer.

It is found in the cytoplasm. It catalyses the reaction tRNA(Arg) + L-arginine + ATP = L-arginyl-tRNA(Arg) + AMP + diphosphate. The sequence is that of Arginine--tRNA ligase from Orientia tsutsugamushi (strain Boryong) (Rickettsia tsutsugamushi).